We begin with the raw amino-acid sequence, 252 residues long: MPKLEVCCYSAECAIEAEQAGADRIELCCAPKEGGLTPSFGTLRAVRDRVALPVHPIIRPRGGDFCYSAAEFEVMLNDVAQVRDMGFPGLVIGLLDADGHVSLARMRRIMHLAGTMDVTFHRAFDMCLNPYQALRQLTDLGVARILSSGQQQSAEAGLALLRELTELSRGPIIMAGACVRLTNLHKFVQSGIQELHSSAGQFFPSGMRYRKAGVSMSADSEADEFSRYRVDSEMVANMKHALTVLPVATRPA.

This sequence belongs to the CutC family.

It localises to the cytoplasm. This chain is PF03932 family protein CutC, found in Sodalis glossinidius (strain morsitans).